A 124-amino-acid chain; its full sequence is Small ribosomal subunit protein uS12 (124 aa).

The disordered stretch occupies residues 9 to 28 (KSERTVQKNQTKSPALDSCP). At D89 the chain carries 3-methylthioaspartic acid.

The protein belongs to the universal ribosomal protein uS12 family. Part of the 30S ribosomal subunit. Contacts proteins S8 and S17. May interact with IF1 in the 30S initiation complex.

Its function is as follows. With S4 and S5 plays an important role in translational accuracy. Functionally, interacts with and stabilizes bases of the 16S rRNA that are involved in tRNA selection in the A site and with the mRNA backbone. Located at the interface of the 30S and 50S subunits, it traverses the body of the 30S subunit contacting proteins on the other side and probably holding the rRNA structure together. The combined cluster of proteins S8, S12 and S17 appears to hold together the shoulder and platform of the 30S subunit. The protein is Small ribosomal subunit protein uS12 of Bdellovibrio bacteriovorus (strain ATCC 15356 / DSM 50701 / NCIMB 9529 / HD100).